The chain runs to 274 residues: UPF0173 metal-dependent hydrolase A2cp1_1196 (274 aa).

The protein belongs to the UPF0173 family.

The polypeptide is UPF0173 metal-dependent hydrolase A2cp1_1196 (Anaeromyxobacter dehalogenans (strain 2CP-1 / ATCC BAA-258)).